A 68-amino-acid polypeptide reads, in one-letter code: MKLSCGFLLIFLVLSAMIATFSEVEATVKCGGCNRKCCPGGCRSGKCINGKCQCYGRSDLNEEFENYQ.

The signal sequence occupies residues 1–26 (MKLSCGFLLIFLVLSAMIATFSEVEA). Disulfide bonds link cysteine 30/cysteine 38, cysteine 33/cysteine 54, cysteine 37/cysteine 47, and cysteine 42/cysteine 52. Positions 56-68 (GRSDLNEEFENYQ) are excised as a propeptide.

In terms of tissue distribution, expressed by the venom gland.

It localises to the secreted. In terms of biological role, probable weak potassium channel blocker. The chain is Peptide TsPep3 from Tityus serrulatus (Brazilian scorpion).